Here is a 449-residue protein sequence, read N- to C-terminus: Secretin receptor (449 aa).

The N-terminal stretch at Met-1–Thr-25 is a signal peptide. Residues Val-26–Lys-141 lie on the Extracellular side of the membrane. Intrachain disulfides connect Cys-46–Cys-75, Cys-66–Cys-107, and Cys-89–Cys-123. N-linked (GlcNAc...) asparagine glycosylation is found at Asn-72, Asn-100, Asn-106, and Asn-128. A helical membrane pass occupies residues Leu-142–Phe-167. Topologically, residues Arg-168–Arg-174 are cytoplasmic. A helical transmembrane segment spans residues Asn-175–Lys-195. The Extracellular segment spans residues Asp-196–Lys-216. An intrachain disulfide couples Cys-215 to Cys-285. Residues Leu-217–Tyr-239 traverse the membrane as a helical segment. The Cytoplasmic segment spans residues Leu-240 to Tyr-254. The chain crosses the membrane as a helical span at residues Leu-255–Thr-276. Topologically, residues Arg-277–Asn-291 are extracellular. Residue Asn-291 is glycosylated (N-linked (GlcNAc...) asparagine). Residues Ala-292–Asn-315 form a helical membrane-spanning segment. Residues Ile-316–Leu-340 lie on the Cytoplasmic side of the membrane. Residues Ala-341–Ile-356 form a helical membrane-spanning segment. At Val-357 to Glu-367 the chain is on the extracellular side. The chain crosses the membrane as a helical span at residues Val-368–Leu-391. Topologically, residues Asn-392–Ile-449 are cytoplasmic. The segment covering Ala-425–Ser-442 has biased composition (polar residues). Residues Ala-425–Ile-449 form a disordered region.

Belongs to the G-protein coupled receptor 2 family. Post-translationally, phosphorylated on Ser and Thr residues at the cytoplasmic C-terminus by G protein-coupled receptor kinases (GRKs). In terms of processing, N-glycosylated. In the brain, expressed in the central amygdala, hippocampus, area postrema, nucleus of the tractus solitary and cerebellum.

It is found in the cell membrane. The protein resides in the basolateral cell membrane. Functionally, g protein-coupled receptor activated by secretin (SCT), which is involved in different processes such as regulation of the pH of the duodenal content, food intake and water homeostasis. Ligand binding causes a conformation change that triggers signaling via guanine nucleotide-binding proteins (G proteins) and activates cAMP-dependent pathway. Upon binding to secretin, regulates the pH of the duodenum by (1) inhibiting the secretion of gastric acid from the parietal cells of the stomach and (2) stimulating the production of bicarbonate (NaHCO(3)) from the ductal cells of the pancreas. In addition to regulating the pH of the duodenal content, plays a central role in diet induced thermogenesis: acts as a non-sympathetic brown fat (BAT) activator mediating prandial thermogenesis, which consequentially induces satiation. Mechanistically, secretin released by the gut after a meal binds to secretin receptor (SCTR) in brown adipocytes, activating brown fat thermogenesis by stimulating lipolysis, which is sensed in the brain and promotes satiation. Also able to stimulate lipolysis in white adipocytes. Also plays an important role in cellular osmoregulation by regulating renal water reabsorption. Also plays a role in the central nervous system: required for synaptic plasticity. In Rattus norvegicus (Rat), this protein is Secretin receptor.